The following is a 387-amino-acid chain: Succinate--CoA ligase [ADP-forming] subunit beta (387 aa).

In terms of domain architecture, ATP-grasp spans 9 to 236 (KELFAKHNVP…RAATDPLELK (228 aa)). Residues lysine 45, 52 to 54 (GRG), serine 94, and glutamate 99 each bind ATP. Mg(2+) contacts are provided by asparagine 191 and aspartate 205. Residues asparagine 256 and 318-320 (GIT) each bind substrate.

Belongs to the succinate/malate CoA ligase beta subunit family. Heterotetramer of two alpha and two beta subunits. The cofactor is Mg(2+).

It catalyses the reaction succinate + ATP + CoA = succinyl-CoA + ADP + phosphate. It carries out the reaction GTP + succinate + CoA = succinyl-CoA + GDP + phosphate. The protein operates within carbohydrate metabolism; tricarboxylic acid cycle; succinate from succinyl-CoA (ligase route): step 1/1. In terms of biological role, succinyl-CoA synthetase functions in the citric acid cycle (TCA), coupling the hydrolysis of succinyl-CoA to the synthesis of either ATP or GTP and thus represents the only step of substrate-level phosphorylation in the TCA. The beta subunit provides nucleotide specificity of the enzyme and binds the substrate succinate, while the binding sites for coenzyme A and phosphate are found in the alpha subunit. The polypeptide is Succinate--CoA ligase [ADP-forming] subunit beta (Mycobacterium bovis (strain ATCC BAA-935 / AF2122/97)).